Reading from the N-terminus, the 501-residue chain is Glutamyl-tRNA(Gln) amidotransferase subunit A (501 aa).

Active-site charge relay system residues include K80 and S155. The active-site Acyl-ester intermediate is the S179.

This sequence belongs to the amidase family. GatA subfamily. As to quaternary structure, heterotrimer of A, B and C subunits.

The catalysed reaction is L-glutamyl-tRNA(Gln) + L-glutamine + ATP + H2O = L-glutaminyl-tRNA(Gln) + L-glutamate + ADP + phosphate + H(+). In terms of biological role, allows the formation of correctly charged Gln-tRNA(Gln) through the transamidation of misacylated Glu-tRNA(Gln) in organisms which lack glutaminyl-tRNA synthetase. The reaction takes place in the presence of glutamine and ATP through an activated gamma-phospho-Glu-tRNA(Gln). This is Glutamyl-tRNA(Gln) amidotransferase subunit A from Cupriavidus necator (strain ATCC 17699 / DSM 428 / KCTC 22496 / NCIMB 10442 / H16 / Stanier 337) (Ralstonia eutropha).